A 149-amino-acid chain; its full sequence is MTQTEFKHRIRISKTDLEGKNPLEYALQDMKGIGRAMARAVIRVTELDPKQQAGYLADEDVLKIESVLEDPATHGIPSWMFNRKKDVYSGLDKHLIETDLVLTVQEDITNMKKIRCYKGIRHELRLPCRGQRTRGSFRKGTSMGVKRKK.

The protein belongs to the universal ribosomal protein uS13 family. In terms of assembly, part of the 30S ribosomal subunit. Forms a loose heterodimer with protein S19. Forms two bridges to the 50S subunit in the 70S ribosome.

Functionally, located at the top of the head of the 30S subunit, it contacts several helices of the 16S rRNA. In the 70S ribosome it contacts the 23S rRNA (bridge B1a) and protein L5 of the 50S subunit (bridge B1b), connecting the 2 subunits; these bridges are implicated in subunit movement. The sequence is that of Small ribosomal subunit protein uS13 from Methanococcus maripaludis (strain DSM 14266 / JCM 13030 / NBRC 101832 / S2 / LL).